The primary structure comprises 303 residues: Mycothiol acetyltransferase (303 aa).

N-acetyltransferase domains lie at 10 to 156 (ALPG…LAVP) and 162 to 303 (LAVR…SGPR). E41 is a binding site for 1D-myo-inositol 2-(L-cysteinylamino)-2-deoxy-alpha-D-glucopyranoside. 86 to 88 (LLV) provides a ligand contact to acetyl-CoA. 1D-myo-inositol 2-(L-cysteinylamino)-2-deoxy-alpha-D-glucopyranoside-binding residues include E189, K228, and E235. Residues 239-241 (LGV) and 246-252 (SGAGLGR) each bind acetyl-CoA. Residue Y272 coordinates 1D-myo-inositol 2-(L-cysteinylamino)-2-deoxy-alpha-D-glucopyranoside. 277–282 (NLRAVR) provides a ligand contact to acetyl-CoA.

It belongs to the acetyltransferase family. MshD subfamily. As to quaternary structure, monomer.

It catalyses the reaction 1D-myo-inositol 2-(L-cysteinylamino)-2-deoxy-alpha-D-glucopyranoside + acetyl-CoA = mycothiol + CoA + H(+). In terms of biological role, catalyzes the transfer of acetyl from acetyl-CoA to desacetylmycothiol (Cys-GlcN-Ins) to form mycothiol. The chain is Mycothiol acetyltransferase from Kineococcus radiotolerans (strain ATCC BAA-149 / DSM 14245 / SRS30216).